Consider the following 538-residue polypeptide: Cytochrome P450 monooxygenase flvC (538 aa).

A helical transmembrane segment spans residues 17 to 37; the sequence is TVLIAGLLVYWVGSAIFLAVL. A heme-binding site is contributed by Cys-478.

It belongs to the cytochrome P450 family. The cofactor is heme.

It is found in the membrane. It catalyses the reaction pre-flavunoidine + reduced [NADPH--hemoprotein reductase] + O2 = 10-hydroxy-pre-flavunoidine + oxidized [NADPH--hemoprotein reductase] + H2O + H(+). The protein operates within secondary metabolite biosynthesis; terpenoid biosynthesis. Cytochrome P450 monooxygenase; part of the gene cluster that mediates the biosynthesis of flavunoidine, an alkaloidal terpenoid with a tetracyclic cage-like core connected to dimethylcadaverine via a C-N bond and acylated with 5,5-dimethyl-L-pipecolate. The tetracyclic core is synthesized by the terpene cyclase flvE and the cytochrome P450 monooxygenase flvD. The terpene cyclase flvE catalyzes the cyclization of farnesyl pyrophosphate (FPP) to form (1R,4R,5S)-(+)-acoradiene and the cytochrome P450 monooxygenase flvD is then responsible for oxidative conversion of (1R,4R,5S)-(+)-acoradiene into the tetracyclic cage present in the final product flavunoidine. In parallel, the N-methyltransferase flvH dimethylates L-lysine to give N,N-dimethyl-L-Lysin which is decarboxylated by flvG to afford dimethylcadaverine. The terpene cyclase-like protein flvF is the enzyme that attaches the dimethylcadaverine precusor at the C-7 of the tetracyclic cage to yield pre-flavunoidine. The cytochrome monooxygenase flvC hydroxylates the C-10 position of pre-flavunoidine whereas the NRPS flvI acylates the terpenoid core at the hydroxylated C-10 with dimethylpipecolate to yield final flavunoidine. The bifunctional enzyme flvA and the dehydrogenase flvB are responsible for the synthesis of the dimethylpipecolate precursor. The PLP-dependent lyase domain of flvA might use L-O-acetyl-homoserine and alpha-keto-isovalerate to form an intermediary ketone that can cyclize intramolecularly to yield an imine. The imine can be reduced by flvB to yield the 6-carboxylated pipecolate. The C-terminal alpha-KG-dependent oxygenase domain of flvA is then proposed to catalyze the decarboxylation to yield dimethylpipecolate. The protein is Cytochrome P450 monooxygenase flvC of Aspergillus flavus (strain ATCC 200026 / FGSC A1120 / IAM 13836 / NRRL 3357 / JCM 12722 / SRRC 167).